Here is a 100-residue protein sequence, read N- to C-terminus: Aspartyl/glutamyl-tRNA(Asn/Gln) amidotransferase subunit C (100 aa).

It belongs to the GatC family. As to quaternary structure, heterotrimer of A, B and C subunits.

The enzyme catalyses L-glutamyl-tRNA(Gln) + L-glutamine + ATP + H2O = L-glutaminyl-tRNA(Gln) + L-glutamate + ADP + phosphate + H(+). It carries out the reaction L-aspartyl-tRNA(Asn) + L-glutamine + ATP + H2O = L-asparaginyl-tRNA(Asn) + L-glutamate + ADP + phosphate + 2 H(+). Allows the formation of correctly charged Asn-tRNA(Asn) or Gln-tRNA(Gln) through the transamidation of misacylated Asp-tRNA(Asn) or Glu-tRNA(Gln) in organisms which lack either or both of asparaginyl-tRNA or glutaminyl-tRNA synthetases. The reaction takes place in the presence of glutamine and ATP through an activated phospho-Asp-tRNA(Asn) or phospho-Glu-tRNA(Gln). This Dictyoglomus thermophilum (strain ATCC 35947 / DSM 3960 / H-6-12) protein is Aspartyl/glutamyl-tRNA(Asn/Gln) amidotransferase subunit C.